The primary structure comprises 524 residues: Leucine-rich repeat-containing protein 1 (524 aa).

LRR repeat units follow at residues 11–34, 35–58, 60–81, 83–105, 107–126, 127–149, 150–172, 173–196, 198–218, 219–242, 244–264, 265–288, 290–310, 311–334, 336–356, 357–380, and 382–405; these read NRHVEAIDKRHCSLVYVPEEIYRY, ARSLEELLLDANQLRELPEQFFQL, KLRKLGLSDNEIQRLPPEIANF, QLVELDVSRNDIPEIPESIAFCK, LQVADFSGNPLTRLPESFPE, LQNLTCLSVNDISLQSLPENIGN, LYNLASLELRENLLTYLPDSLTQ, LRRLEELDLGNNEIYNLPESIGAL, HLKDLWLDGNQLSELPQEIGN, LKNLLCLDVSENRLERLPEEISGL, SLTYLVISQNLLETIPEGIGK, LKKLSILKLDQNRLTQLPEAIGDC, NLTELVLTENRLLTLPKSIGK, LKKLSNLNADRNKLVSLPKEIGGC, SLTMFCIRDNRLTRLPAEVSQ, AVELHVLDVAGNRLHHLPLSLTTL, and LKALWLSDNQSQPLLTFQTDIDRA. Positions 456 to 512 form a coiled coil; that stretch reads SAIRFLEDEKDEDENETRTLQRRATPHPGELKNMKKTVENLRNDMNAAKGLDSNKNE. Positions 464-485 are disordered; it reads EKDEDENETRTLQRRATPHPGE. Thr-480 carries the post-translational modification Phosphothreonine.

Interacts with DLG1. May form a complex with DLG1 and ERBIN, where interaction between LRRC1 and ERBIN is indirect.

It is found in the cytoplasm. It localises to the membrane. This Mus musculus (Mouse) protein is Leucine-rich repeat-containing protein 1 (Lrrc1).